Consider the following 460-residue polypeptide: Argininosuccinate lyase (460 aa).

This sequence belongs to the lyase 1 family. Argininosuccinate lyase subfamily.

The protein localises to the cytoplasm. The catalysed reaction is 2-(N(omega)-L-arginino)succinate = fumarate + L-arginine. It functions in the pathway amino-acid biosynthesis; L-arginine biosynthesis; L-arginine from L-ornithine and carbamoyl phosphate: step 3/3. The sequence is that of Argininosuccinate lyase from Buchnera aphidicola subsp. Cinara cedri (strain Cc).